Reading from the N-terminus, the 198-residue chain is Molybdopterin synthase catalytic subunit (198 aa).

Over residues 1 to 27 the composition is skewed to low complexity; it reads MASQPPQEPTPTATSTPSTSALASLPP. A disordered region spans residues 1 to 40; that stretch reads MASQPPQEPTPTATSTPSTSALASLPPHLDPTTYPRTLTS. Substrate is bound by residues 143-144, lysine 159, and 166-168; these read HR and KRE. The disordered stretch occupies residues 176-198; sequence EWRENRERDAEGKVVAEKQEERE.

Belongs to the MoaE family. MOCS2B subfamily. Heterotetramer; composed of 2 small (MOCS2A) and 2 large (MOCS2B) subunits.

It is found in the cytoplasm. It catalyses the reaction 2 [molybdopterin-synthase sulfur-carrier protein]-C-terminal-Gly-aminoethanethioate + cyclic pyranopterin phosphate + H2O = molybdopterin + 2 [molybdopterin-synthase sulfur-carrier protein]-C-terminal Gly-Gly + 2 H(+). The protein operates within cofactor biosynthesis; molybdopterin biosynthesis. Functionally, catalytic subunit of the molybdopterin synthase complex, a complex that catalyzes the conversion of precursor Z into molybdopterin. Acts by mediating the incorporation of 2 sulfur atoms from thiocarboxylated MOCS2A into precursor Z to generate a dithiolene group. This chain is Molybdopterin synthase catalytic subunit, found in Aspergillus clavatus (strain ATCC 1007 / CBS 513.65 / DSM 816 / NCTC 3887 / NRRL 1 / QM 1276 / 107).